We begin with the raw amino-acid sequence, 270 residues long: Diaminopimelate epimerase (270 aa).

Residues asparagine 15, glutamine 49, and asparagine 66 each contribute to the substrate site. The Proton donor role is filled by cysteine 75. Substrate-binding positions include 76–77 (GN), asparagine 155, asparagine 187, and 204–205 (ER). The Proton acceptor role is filled by cysteine 213. Position 214-215 (214-215 (GS)) interacts with substrate.

It belongs to the diaminopimelate epimerase family. Homodimer.

The protein resides in the cytoplasm. The catalysed reaction is (2S,6S)-2,6-diaminopimelate = meso-2,6-diaminopimelate. Its pathway is amino-acid biosynthesis; L-lysine biosynthesis via DAP pathway; DL-2,6-diaminopimelate from LL-2,6-diaminopimelate: step 1/1. Catalyzes the stereoinversion of LL-2,6-diaminopimelate (L,L-DAP) to meso-diaminopimelate (meso-DAP), a precursor of L-lysine and an essential component of the bacterial peptidoglycan. The polypeptide is Diaminopimelate epimerase (Rickettsia africae (strain ESF-5)).